The following is a 299-amino-acid chain: EDCFTIWLDLNIFLSLGVDCWIDNTRVIYNRSSGYMSNAPGVQIRVPGFGKTYSIEYLDDNKLAGYMHTLVQNLVNNAYVRDETVRAPPYDWRLEPRHQEEYYLKLAGLVEEMYATYGKPVFLIGHSLGFCHLLYFLLLQPQGIPIMSSIKLVEEQRITTTSPWMFPSHQVWPEDHVFISTPNFNYTFSDFQRFFADLHFEDGWYMWLQSRDLLAGLPAPGVEVYCLYGVGLPTPHTYMYDHGFPYTDPVGIIYEDGDDTVTTHSIELCSHWQGRQPQPVHLLPLRGTQHLNMVFSNKT.

An N-linked (GlcNAc...) asparagine glycan is attached at asparagine 30. Serine 127 functions as the Nucleophile in the catalytic mechanism. N-linked (GlcNAc...) asparagine glycosylation occurs at asparagine 185. A disulfide bridge connects residues cysteine 226 and cysteine 269. Active-site charge relay system residues include aspartate 258 and histidine 290.

This sequence belongs to the AB hydrolase superfamily. Lipase family.

It localises to the secreted. The enzyme catalyses a sterol + a 1,2-diacyl-sn-glycero-3-phosphocholine = a sterol ester + a 1-acyl-sn-glycero-3-phosphocholine. With respect to regulation, APOA1 is the most potent activator in plasma. Also activated by APOE, APOC1 and APOA4. Its function is as follows. Central enzyme in the extracellular metabolism of plasma lipoproteins. Synthesized mainly in the liver and secreted into plasma where it converts cholesterol and phosphatidylcholines (lecithins) to cholesteryl esters and lysophosphatidylcholines on the surface of high and low density lipoproteins (HDLs and LDLs). The cholesterol ester is then transported back to the liver. Has a preference for plasma 16:0-18:2 or 18:O-18:2 phosphatidylcholines. Also produced in the brain by primary astrocytes, and esterifies free cholesterol on nascent APOE-containing lipoproteins secreted from glia and influences cerebral spinal fluid (CSF) APOE- and APOA1 levels. Together with APOE and the cholesterol transporter ABCA1, plays a key role in the maturation of glial-derived, nascent lipoproteins. Required for remodeling high-density lipoprotein particles into their spherical forms. This is Phosphatidylcholine-sterol acyltransferase (LCAT) from Eliomys quercinus (Garden dormouse).